The following is a 706-amino-acid chain: Probable cyclic nucleotide-gated ion channel 3 (706 aa).

At 1-85 the chain is on the cytoplasmic side; the sequence is MMNPQRNKFV…NDSYLQSWNK (85 aa). A helical membrane pass occupies residues 86–106; sequence IFLLLSVVALAFDPLFFYIPY. The Extracellular portion of the chain corresponds to 107–119; the sequence is VKPERFCLNLDKK. A helical transmembrane segment spans residues 120–140; sequence LQTIACVFRTFIDAFYVVHML. Residues 141–174 are Cytoplasmic-facing; the sequence is FQFHTGFITPSSSGFGRGELNEKHKDIALRYLGS. Residues 175 to 195 form a helical membrane-spanning segment; that stretch reads YFLIDLLSILPIPQVVVLAIV. Residues 196 to 208 lie on the Extracellular side of the membrane; it reads PRMRRPASLVAKE. Residues 209 to 229 form a helical membrane-spanning segment; it reads LLKWVIFCQYVPRIARIYPLF. Residues 230–247 lie on the Cytoplasmic side of the membrane; the sequence is KEVTRTSGLVTETAWAGA. Residues 248-268 form a helical membrane-spanning segment; it reads ALNLFLYMLASHVFGSFWYLI. At 269 to 371 the chain is on the extracellular side; that stretch reads SIERKDRCWR…QNLKTSAFEG (103 aa). The chain crosses the membrane as a helical span at residues 372–392; the sequence is EIIFAIVICISGLVLFALLIG. Over 393 to 706 the chain is Cytoplasmic; that stretch reads NMQKYLQSTT…ADPEFPMDET (314 aa). A nucleoside 3',5'-cyclic phosphate-binding positions include 477–600 and Asp-548; that span reads WFQA…KQLR. The segment at 591–606 is calmodulin-binding; it reads YRRLHSKQLRHMFRFY. The region spanning 611–640 is the IQ domain; it reads QTWAACFIQAAWKRHCRRKLSKALREEEGK.

It belongs to the cyclic nucleotide-gated cation channel (TC 1.A.1.5) family. As to quaternary structure, homotetramer or heterotetramer.

The protein resides in the cell membrane. Probable cyclic nucleotide-gated ion channel. The chain is Probable cyclic nucleotide-gated ion channel 3 (CNGC3) from Arabidopsis thaliana (Mouse-ear cress).